Here is a 527-residue protein sequence, read N- to C-terminus: Bifunctional purine biosynthesis protein PurH (527 aa).

Positions 1 to 144 (MNRRALISVS…KNHESVAIIV (144 aa)) constitute an MGS-like domain.

The protein belongs to the PurH family.

The enzyme catalyses (6R)-10-formyltetrahydrofolate + 5-amino-1-(5-phospho-beta-D-ribosyl)imidazole-4-carboxamide = 5-formamido-1-(5-phospho-D-ribosyl)imidazole-4-carboxamide + (6S)-5,6,7,8-tetrahydrofolate. The catalysed reaction is IMP + H2O = 5-formamido-1-(5-phospho-D-ribosyl)imidazole-4-carboxamide. The protein operates within purine metabolism; IMP biosynthesis via de novo pathway; 5-formamido-1-(5-phospho-D-ribosyl)imidazole-4-carboxamide from 5-amino-1-(5-phospho-D-ribosyl)imidazole-4-carboxamide (10-formyl THF route): step 1/1. It participates in purine metabolism; IMP biosynthesis via de novo pathway; IMP from 5-formamido-1-(5-phospho-D-ribosyl)imidazole-4-carboxamide: step 1/1. This is Bifunctional purine biosynthesis protein PurH from Heliobacterium modesticaldum (strain ATCC 51547 / Ice1).